Reading from the N-terminus, the 829-residue chain is Outer dense fiber protein 2 (829 aa).

Residues S73 and S74 each carry the phosphoserine modification. T92 carries the post-translational modification Phosphothreonine. A Phosphoserine; by TSSK4 modification is found at S95. Phosphoserine occurs at positions 106 and 109. T110 carries the phosphothreonine modification. 2 positions are modified to phosphoserine: S115 and S129. K138 is covalently cross-linked (Glycyl lysine isopeptide (Lys-Gly) (interchain with G-Cter in SUMO2)). At S139 the chain carries Phosphoserine. Positions 144 to 217 form a coiled coil; that stretch reads QKGERQMAKR…MSKLVEAEMD (74 aa). T231 carries the post-translational modification Phosphothreonine. Coiled coils occupy residues 245–423 and 461–798; these read DINT…AEQL and EIIV…NYVQ. S261 is modified (phosphoserine). Positions 392–413 are disordered; sequence KQKGDRDKESLKKAIRAQKERA. The tract at residues 537–701 is interaction with BBOF1; sequence KNYEGMIDNY…EAIHQSQLRL (165 aa). S632 is modified (phosphoserine).

It belongs to the ODF2 family. As to quaternary structure, self-associates. Associates with microtubules and forms a fibrillar structure partially linked to the microtubule network. Interacts via its C-terminus with PLK1. Interacts with ODF1. Interacts with MARK4; the interaction is required for localization of ODF2 to centrioles. Interacts with TSSK4. Interacts with AKNA. Interacts with QRICH2. Interacts with CFAP58. Interacts with BBOF1. Interacts with CCDC38. Interacts with CCDC42. Tyrosine phosphorylated. Phosphorylated by TSSK4 on Ser-95. In terms of tissue distribution, testis-specific (at protein level). Highly expressed in cytoplasm of step 2 round spermatids. Detected in the middle piece and extends to about half the principal piece of the sperm tails.

The protein resides in the cytoplasm. The protein localises to the cytoskeleton. It localises to the microtubule organizing center. Its subcellular location is the centrosome. It is found in the cell projection. The protein resides in the cilium. The protein localises to the centriole. It localises to the spindle pole. Its subcellular location is the flagellum. Its function is as follows. Seems to be a major component of sperm tail outer dense fibers (ODF). ODFs are filamentous structures located on the outside of the axoneme in the midpiece and principal piece of the mammalian sperm tail and may help to maintain the passive elastic structures and elastic recoil of the sperm tail. May have a modulating influence on sperm motility. Functions as a general scaffold protein that is specifically localized at the distal/subdistal appendages of mother centrioles. Component of the centrosome matrix required for the localization of PLK1 and NIN to the centrosomes. Required for the formation and/or maintenance of normal CETN1 assembly. This Homo sapiens (Human) protein is Outer dense fiber protein 2 (ODF2).